The sequence spans 358 residues: UDP-N-acetylglucosamine--N-acetylmuramyl-(pentapeptide) pyrophosphoryl-undecaprenol N-acetylglucosamine transferase (358 aa).

Residues 11-13 (TGG), N122, R161, S189, I243, 262-267 (ALTVCE), and Q288 contribute to the UDP-N-acetyl-alpha-D-glucosamine site.

The protein belongs to the glycosyltransferase 28 family. MurG subfamily.

It localises to the cell inner membrane. It catalyses the reaction di-trans,octa-cis-undecaprenyl diphospho-N-acetyl-alpha-D-muramoyl-L-alanyl-D-glutamyl-meso-2,6-diaminopimeloyl-D-alanyl-D-alanine + UDP-N-acetyl-alpha-D-glucosamine = di-trans,octa-cis-undecaprenyl diphospho-[N-acetyl-alpha-D-glucosaminyl-(1-&gt;4)]-N-acetyl-alpha-D-muramoyl-L-alanyl-D-glutamyl-meso-2,6-diaminopimeloyl-D-alanyl-D-alanine + UDP + H(+). It functions in the pathway cell wall biogenesis; peptidoglycan biosynthesis. Functionally, cell wall formation. Catalyzes the transfer of a GlcNAc subunit on undecaprenyl-pyrophosphoryl-MurNAc-pentapeptide (lipid intermediate I) to form undecaprenyl-pyrophosphoryl-MurNAc-(pentapeptide)GlcNAc (lipid intermediate II). The polypeptide is UDP-N-acetylglucosamine--N-acetylmuramyl-(pentapeptide) pyrophosphoryl-undecaprenol N-acetylglucosamine transferase (Coxiella burnetii (strain CbuK_Q154) (Coxiella burnetii (strain Q154))).